Consider the following 55-residue polypeptide: UPF0391 membrane protein Sfum_0248 (55 aa).

A run of 2 helical transmembrane segments spans residues 4–24 and 28–48; these read WALI…GGII and AWIA…SLLS.

Belongs to the UPF0391 family.

It localises to the cell membrane. The sequence is that of UPF0391 membrane protein Sfum_0248 from Syntrophobacter fumaroxidans (strain DSM 10017 / MPOB).